Reading from the N-terminus, the 450-residue chain is MFS-type transporter avaK (450 aa).

Transmembrane regions (helical) follow at residues 18–38 (VMAL…LSMP), 100–120 (RVVC…SGLL), 148–168 (AVAL…AAPA), 171–191 (ALVA…MLFV), 244–264 (APII…HFLL), 280–300 (LVLV…MPAA), 329–349 (FGFF…ALAF), and 408–428 (GWLG…LVAV).

The protein belongs to the major facilitator superfamily.

It localises to the membrane. It participates in secondary metabolite biosynthesis. MFS-type transporter; part of the cluster that mediates the biosynthesis of a highly modified cyclo-arginine-tryptophan dipeptide (cRW). The protein is MFS-type transporter avaK of Aspergillus versicolor.